Reading from the N-terminus, the 498-residue chain is Glutamyl-tRNA(Gln) amidotransferase subunit A (498 aa).

Catalysis depends on charge relay system residues Lys85 and Ser160. Ser184 acts as the Acyl-ester intermediate in catalysis.

This sequence belongs to the amidase family. GatA subfamily. Heterotrimer of A, B and C subunits.

It catalyses the reaction L-glutamyl-tRNA(Gln) + L-glutamine + ATP + H2O = L-glutaminyl-tRNA(Gln) + L-glutamate + ADP + phosphate + H(+). In terms of biological role, allows the formation of correctly charged Gln-tRNA(Gln) through the transamidation of misacylated Glu-tRNA(Gln) in organisms which lack glutaminyl-tRNA synthetase. The reaction takes place in the presence of glutamine and ATP through an activated gamma-phospho-Glu-tRNA(Gln). This Mycolicibacterium vanbaalenii (strain DSM 7251 / JCM 13017 / BCRC 16820 / KCTC 9966 / NRRL B-24157 / PYR-1) (Mycobacterium vanbaalenii) protein is Glutamyl-tRNA(Gln) amidotransferase subunit A.